An 88-amino-acid chain; its full sequence is Small ribosomal subunit protein uS15 (88 aa).

The protein belongs to the universal ribosomal protein uS15 family. Part of the 30S ribosomal subunit. Forms a bridge to the 50S subunit in the 70S ribosome, contacting the 23S rRNA.

In terms of biological role, one of the primary rRNA binding proteins, it binds directly to 16S rRNA where it helps nucleate assembly of the platform of the 30S subunit by binding and bridging several RNA helices of the 16S rRNA. Forms an intersubunit bridge (bridge B4) with the 23S rRNA of the 50S subunit in the ribosome. The chain is Small ribosomal subunit protein uS15 from Thermoanaerobacter pseudethanolicus (strain ATCC 33223 / 39E) (Clostridium thermohydrosulfuricum).